Consider the following 346-residue polypeptide: Histidinol-phosphate aminotransferase (346 aa).

Position 209 is an N6-(pyridoxal phosphate)lysine (lysine 209).

This sequence belongs to the class-II pyridoxal-phosphate-dependent aminotransferase family. Histidinol-phosphate aminotransferase subfamily. As to quaternary structure, homodimer. The cofactor is pyridoxal 5'-phosphate.

It carries out the reaction L-histidinol phosphate + 2-oxoglutarate = 3-(imidazol-4-yl)-2-oxopropyl phosphate + L-glutamate. Its pathway is amino-acid biosynthesis; L-histidine biosynthesis; L-histidine from 5-phospho-alpha-D-ribose 1-diphosphate: step 7/9. In Aliivibrio fischeri (strain MJ11) (Vibrio fischeri), this protein is Histidinol-phosphate aminotransferase.